A 397-amino-acid chain; its full sequence is LIM/homeobox protein Lhx9 (397 aa).

LIM zinc-binding domains lie at 69–130 (ALCA…RFSV) and 131–193 (QRCA…LLQG). Disordered regions lie at residues 248 to 272 (ENEA…RMRT), 330 to 364 (ENGG…TLTD), and 378 to 397 (SNMD…TNLF). Positions 267-326 (TKRMRTSFKHHQLRTMKSYFAINHNPDAKDLKQLAQKTGLTKRVLQVWFQNARAKFRRNL) form a DNA-binding region, homeobox. Low complexity predominate over residues 353 to 364 (LTPPGTATTLTD).

Interacts with LDB1 and LDB2.

It localises to the nucleus. Its function is as follows. Involved in gonadal development. This Homo sapiens (Human) protein is LIM/homeobox protein Lhx9 (LHX9).